The primary structure comprises 188 residues: Crossover junction endodeoxyribonuclease RuvC (188 aa).

Active-site residues include aspartate 7, glutamate 68, and aspartate 141. Positions 7, 68, and 141 each coordinate Mg(2+).

The protein belongs to the RuvC family. In terms of assembly, homodimer which binds Holliday junction (HJ) DNA. The HJ becomes 2-fold symmetrical on binding to RuvC with unstacked arms; it has a different conformation from HJ DNA in complex with RuvA. In the full resolvosome a probable DNA-RuvA(4)-RuvB(12)-RuvC(2) complex forms which resolves the HJ. Requires Mg(2+) as cofactor.

The protein resides in the cytoplasm. The enzyme catalyses Endonucleolytic cleavage at a junction such as a reciprocal single-stranded crossover between two homologous DNA duplexes (Holliday junction).. The RuvA-RuvB-RuvC complex processes Holliday junction (HJ) DNA during genetic recombination and DNA repair. Endonuclease that resolves HJ intermediates. Cleaves cruciform DNA by making single-stranded nicks across the HJ at symmetrical positions within the homologous arms, yielding a 5'-phosphate and a 3'-hydroxyl group; requires a central core of homology in the junction. The consensus cleavage sequence is 5'-(A/T)TT(C/G)-3'. Cleavage occurs on the 3'-side of the TT dinucleotide at the point of strand exchange. HJ branch migration catalyzed by RuvA-RuvB allows RuvC to scan DNA until it finds its consensus sequence, where it cleaves and resolves the cruciform DNA. This chain is Crossover junction endodeoxyribonuclease RuvC, found in Mycobacterium leprae (strain TN).